We begin with the raw amino-acid sequence, 425 residues long: MNLLIKGGRVIDPSQGIDEVLDILVENGAIKELGKGLAAPAGAGVVDAAGLIVTPGLIDMHVHLRDPGLEYKEDIVTGTRAAAAGGFTSVACMPNTKPVNDNKAVTSYIVAKAKAEGLVNVFPVGSITQGSKGDALAEMGDLKEAGCVAVSDDGRPVTSSELMRRALEYAKGMGIMVISHAEDLSLVGEGVMNEGFVSTELGLKGIPWAAEDAATARDVYLAEFTNSPLHIAHVSTMGSLRIIRNAKARGVKVTCETAPHYFSLTDDAVRGYNTNAKMNPPLRTADDLAAVKEALKDGTIDAIATDHAPHHLDEKDVEFNVALNGIIGLETSLPLSLKLVEEGVLTLPALVEKMACNPAAILGIDRGTLRQGAVADITVIDPAAVWTVEAGALASKSKNSPFLGWEMKGAAAYTIVGGTVVHSRG.

Positions 61 and 63 each coordinate Zn(2+). Residues 63–65 (HLR) and asparagine 95 contribute to the substrate site. The Zn(2+) site is built by aspartate 153, histidine 180, and histidine 233. Asparagine 279 is a substrate binding site. Residue aspartate 306 participates in Zn(2+) binding. Aspartate 306 is an active-site residue. Histidine 310 is a binding site for substrate.

It belongs to the metallo-dependent hydrolases superfamily. DHOase family. Class I DHOase subfamily. Requires Zn(2+) as cofactor.

It catalyses the reaction (S)-dihydroorotate + H2O = N-carbamoyl-L-aspartate + H(+). It participates in pyrimidine metabolism; UMP biosynthesis via de novo pathway; (S)-dihydroorotate from bicarbonate: step 3/3. Catalyzes the reversible cyclization of carbamoyl aspartate to dihydroorotate. The sequence is that of Dihydroorotase from Geobacter sulfurreducens (strain ATCC 51573 / DSM 12127 / PCA).